Consider the following 721-residue polypeptide: Mitogen-activated protein kinase 6 (721 aa).

A Peptide (Met-Gly) (interchain with G-Cter in ubiquitin) cross-link involves residue Met-1. Positions 20-316 (YMDLKPLGCG…AEEALSHPYM (297 aa)) constitute a Protein kinase domain. ATP is bound by residues 26–34 (LGCGGNGLV) and Lys-49. Catalysis depends on Asp-152, which acts as the Proton acceptor. Ser-189 is modified (phosphoserine; by PAK1, PAK2 and PAK3). The short motif at 189–191 (SEG) is the SEG motif element. The FRIEDE motif motif lies at 332–337 (FHIEDE). Residues Ser-386, Ser-452, Ser-556, Ser-558, Ser-665, and Ser-684 each carry the phosphoserine modification. Residues 701–715 (AMKSSPQIPHQTYSS) are compositionally biased toward polar residues. Positions 701 to 721 (AMKSSPQIPHQTYSSILKHLN) are disordered.

Belongs to the protein kinase superfamily. CMGC Ser/Thr protein kinase family. MAP kinase subfamily. In terms of assembly, heterodimer with ERK4/MAPK4. Interacts with (via FRIEDE motif) MAPKAPK5. Interacts with UBE3A; this interaction may be indirect and mediated by HERC2, possibly via HERC2 interaction with NEURL4. Requires Mg(2+) as cofactor. Post-translationally, phosphorylated at Ser-189 by PAK1, PAK2 and PAK3 resulting in catalytic activation. Phosphorylated by MAPKAPK5 at other sites. In terms of processing, ubiquitination at Met-1 leads to degradation by the proteasome pathway. In terms of tissue distribution, highest expression in the skeletal muscle, followed by the brain. Also found in heart, placenta, lung, liver, pancreas, kidney and skin fibroblasts.

The protein resides in the cytoplasm. Its subcellular location is the nucleus. It catalyses the reaction L-seryl-[protein] + ATP = O-phospho-L-seryl-[protein] + ADP + H(+). It carries out the reaction L-threonyl-[protein] + ATP = O-phospho-L-threonyl-[protein] + ADP + H(+). With respect to regulation, activated by phosphorylation at Ser-189. Atypical MAPK protein. Phosphorylates microtubule-associated protein 2 (MAP2) and MAPKAPK5. The precise role of the complex formed with MAPKAPK5 is still unclear, but the complex follows a complex set of phosphorylation events: upon interaction with atypical MAPKAPK5, ERK3/MAPK6 is phosphorylated at Ser-189 and then mediates phosphorylation and activation of MAPKAPK5, which in turn phosphorylates ERK3/MAPK6. May promote entry in the cell cycle. The polypeptide is Mitogen-activated protein kinase 6 (MAPK6) (Homo sapiens (Human)).